The primary structure comprises 49 residues: uncharacterized protein (49 aa).

The helical transmembrane segment at 5–27 threads the bilayer; sequence ILEILSAFIRILFKLLYCWALFF.

It localises to the membrane. This is an uncharacterized protein from Saccharomyces cerevisiae (strain ATCC 204508 / S288c) (Baker's yeast).